A 179-amino-acid chain; its full sequence is Large ribosomal subunit protein bL9 (179 aa).

Residues 155 to 179 (KPEEAPVPVAEEPTAETEQAEVAAE) form a disordered region. Acidic residues predominate over residues 167-179 (PTAETEQAEVAAE).

The protein belongs to the bacterial ribosomal protein bL9 family.

In terms of biological role, binds to the 23S rRNA. The protein is Large ribosomal subunit protein bL9 of Porphyromonas gingivalis (strain ATCC BAA-308 / W83).